A 514-amino-acid chain; its full sequence is DNA-(apurinic or apyrimidinic site) endonuclease 2 (514 aa).

Mg(2+) contacts are provided by Asn-8 and Glu-48. Tyr-156 is an active-site residue. Asp-197, Asn-199, Asp-303, and His-304 together coordinate Mg(2+). Residue Asp-197 is the Proton donor/acceptor of the active site. Residue His-304 is the Proton acceptor of the active site. A disordered region spans residues 359 to 417; that stretch reads PSNQTQVHMRKNKARVRSTRSRPSKTGSSRGQKNLMSYFQPSSSGPQTSNLDLPSLGTL. The segment covering 366-381 has biased composition (basic residues); that stretch reads HMRKNKARVRSTRSRP. A Glycyl lysine isopeptide (Lys-Gly) (interchain with G-Cter in ubiquitin) cross-link involves residue Lys-371. Residues 382–410 show a composition bias toward polar residues; the sequence is SKTGSSRGQKNLMSYFQPSSSGPQTSNLD. Residues 390–397 form a required for the interaction and colocalization with PCNA in nuclear foci in presence of oxidative-induced DNA damaging agents region; sequence QKNLMSYF. Zn(2+) contacts are provided by Cys-465, His-468, Cys-491, and Cys-505. The GRF-type zinc finger occupies 465–514; that stretch reads CGGHREPCVMRTVKKPGPNLGRHFYMCARPQGPPTDPSSRCNFFLWSRPS.

This sequence belongs to the DNA repair enzymes AP/ExoA family. As to quaternary structure, interacts with PCNA; this interaction is triggered by reactive oxygen species and increased by misincorporation of uracil in nuclear DNA. Requires Mg(2+) as cofactor. It depends on Mn(2+) as a cofactor. Post-translationally, ubiquitinated by the CUL9-RBX1 complex. Ubiquitinated by MKRN3 at Lys-371 leading to proteasomal degradation.

It is found in the nucleus. It localises to the cytoplasm. The protein resides in the mitochondrion. It carries out the reaction Exonucleolytic cleavage in the 3'- to 5'-direction to yield nucleoside 5'-phosphates.. With respect to regulation, 3'-5' exonuclease activity is activated by sodium and manganese. 3'-5' exonuclease and 3'-phosphodiesterase activities are stimulated in presence of PCNA. In terms of biological role, functions as a weak apurinic/apyrimidinic (AP) endodeoxyribonuclease in the DNA base excision repair (BER) pathway of DNA lesions induced by oxidative and alkylating agents. Initiates repair of AP sites in DNA by catalyzing hydrolytic incision of the phosphodiester backbone immediately adjacent to the damage, generating a single-strand break with 5'-deoxyribose phosphate and 3'-hydroxyl ends. Also displays double-stranded DNA 3'-5' exonuclease, 3'-phosphodiesterase activities. Shows robust 3'-5' exonuclease activity on 3'-recessed heteroduplex DNA and is able to remove mismatched nucleotides preferentially. Shows fairly strong 3'-phosphodiesterase activity involved in the removal of 3'-damaged termini formed in DNA by oxidative agents. In the nucleus functions in the PCNA-dependent BER pathway. Plays a role in reversing blocked 3' DNA ends, problematic lesions that preclude DNA synthesis. Required for somatic hypermutation (SHM) and DNA cleavage step of class switch recombination (CSR) of immunoglobulin genes. Required for proper cell cycle progression during proliferation of peripheral lymphocytes. The sequence is that of DNA-(apurinic or apyrimidinic site) endonuclease 2 (APEX2) from Bos taurus (Bovine).